We begin with the raw amino-acid sequence, 487 residues long: Glutamyl-tRNA(Gln) amidotransferase subunit A (487 aa).

Active-site charge relay system residues include Lys78 and Ser153. The Acyl-ester intermediate role is filled by Ser177.

This sequence belongs to the amidase family. GatA subfamily. In terms of assembly, heterotrimer of A, B and C subunits.

The enzyme catalyses L-glutamyl-tRNA(Gln) + L-glutamine + ATP + H2O = L-glutaminyl-tRNA(Gln) + L-glutamate + ADP + phosphate + H(+). In terms of biological role, allows the formation of correctly charged Gln-tRNA(Gln) through the transamidation of misacylated Glu-tRNA(Gln) in organisms which lack glutaminyl-tRNA synthetase. The reaction takes place in the presence of glutamine and ATP through an activated gamma-phospho-Glu-tRNA(Gln). The polypeptide is Glutamyl-tRNA(Gln) amidotransferase subunit A (Oleidesulfovibrio alaskensis (strain ATCC BAA-1058 / DSM 17464 / G20) (Desulfovibrio alaskensis)).